A 357-amino-acid chain; its full sequence is cAMP-responsive element modulator (357 aa).

A KID domain is found at 101 to 160 (TVQVATIAETDDSADSEVIDSHKRREILSRRPSYRKILNELSSDVPGIPKIEEEKSEEEG). Residues Ser116, Ser142, Ser284, Ser287, and Ser290 each carry the phosphoserine modification. The bZIP domain occupies 299–357 (TRKRELRLMKNREAAKECRRRKKEYVKCLESRVAVLEVQNKKLIEELETLKDICSPKTD). The basic motif stretch occupies residues 300 to 325 (RKRELRLMKNREAAKECRRRKKEYVK). The segment at 327–348 (LESRVAVLEVQNKKLIEELETL) is leucine-zipper.

Belongs to the bZIP family. In terms of assembly, binds DNA as a dimer. Interacts with CDC34. Interacts with FHL5. Isoform delta forms a heterodimer with CREB3L4. May interact with TSSK4. Post-translationally, stimulated by phosphorylation. Phosphorylated on Ser-116 by TSSK4 in vitro. In terms of processing, ubiquitinated by CDC34 and RAD6B in order to be degraded by the proteasome. Isoform Tau is expressed in testis germ cells. CREM-theta1- and CREM-theta2-containing isoforms are expressed in testis.

It localises to the nucleus. Functionally, transcriptional regulator that binds the cAMP response element (CRE), a sequence present in many viral and cellular promoters. Isoforms are either transcriptional activators or repressors. Isoform Delta is an activator. Plays a role in spermatogenesis and is involved in spermatid maturation. Binding of isoform Tau (activator) to CRE is increased by CREB3L4. The CREM isoform Tau-CREB3L4 heterodimer functions through CRE and may recruit HIRA to CRE to regulate histone exchange. This is cAMP-responsive element modulator (Crem) from Rattus norvegicus (Rat).